The primary structure comprises 277 residues: 3-methyl-2-oxobutanoate hydroxymethyltransferase (277 aa).

Residues Asp53 and Asp96 each contribute to the Mg(2+) site. 3-methyl-2-oxobutanoate is bound by residues 53 to 54 (DS), Asp96, and Lys126. Residue Glu128 coordinates Mg(2+). Residue Glu195 is the Proton acceptor of the active site.

The protein belongs to the PanB family. Homodecamer; pentamer of dimers. Mg(2+) is required as a cofactor.

It is found in the cytoplasm. The catalysed reaction is 3-methyl-2-oxobutanoate + (6R)-5,10-methylene-5,6,7,8-tetrahydrofolate + H2O = 2-dehydropantoate + (6S)-5,6,7,8-tetrahydrofolate. The protein operates within cofactor biosynthesis; (R)-pantothenate biosynthesis; (R)-pantoate from 3-methyl-2-oxobutanoate: step 1/2. Catalyzes the reversible reaction in which hydroxymethyl group from 5,10-methylenetetrahydrofolate is transferred onto alpha-ketoisovalerate to form ketopantoate. The polypeptide is 3-methyl-2-oxobutanoate hydroxymethyltransferase (Chlorobaculum parvum (strain DSM 263 / NCIMB 8327) (Chlorobium vibrioforme subsp. thiosulfatophilum)).